Consider the following 95-residue polypeptide: uncharacterized protein (95 aa).

The chain crosses the membrane as a helical span at residues 45 to 65; sequence WLSGLAFVLQAALVMPVVLAF.

The protein resides in the membrane. This is an uncharacterized protein from Mycobacterium leprae (strain TN).